The primary structure comprises 409 residues: Glutamyl-tRNA(Gln) amidotransferase subunit D (409 aa).

An Asparaginase/glutaminase domain is found at arginine 68–asparagine 390. Active-site residues include threonine 78, threonine 152, aspartate 153, and lysine 230.

This sequence belongs to the asparaginase 1 family. GatD subfamily. In terms of assembly, heterodimer of GatD and GatE.

The enzyme catalyses L-glutamyl-tRNA(Gln) + L-glutamine + ATP + H2O = L-glutaminyl-tRNA(Gln) + L-glutamate + ADP + phosphate + H(+). Its function is as follows. Allows the formation of correctly charged Gln-tRNA(Gln) through the transamidation of misacylated Glu-tRNA(Gln) in organisms which lack glutaminyl-tRNA synthetase. The reaction takes place in the presence of glutamine and ATP through an activated gamma-phospho-Glu-tRNA(Gln). The GatDE system is specific for glutamate and does not act on aspartate. This Thermoplasma acidophilum (strain ATCC 25905 / DSM 1728 / JCM 9062 / NBRC 15155 / AMRC-C165) protein is Glutamyl-tRNA(Gln) amidotransferase subunit D.